The sequence spans 143 residues: Large ribosomal subunit protein uL13 (143 aa).

The protein belongs to the universal ribosomal protein uL13 family. Part of the 50S ribosomal subunit.

Functionally, this protein is one of the early assembly proteins of the 50S ribosomal subunit, although it is not seen to bind rRNA by itself. It is important during the early stages of 50S assembly. The polypeptide is Large ribosomal subunit protein uL13 (Natranaerobius thermophilus (strain ATCC BAA-1301 / DSM 18059 / JW/NM-WN-LF)).